The primary structure comprises 121 residues: MKFLVFLGIITTVAAFHQECSLQSCTQHQPYVVDDPCPIHFYSKWYIRVGARKSAPLIELCVDEAGSKSPIQYIDIGNYTVSCLPFTINCQEPKLGSLVVRCSFYEDFLEYHDVRVVLDFI.

An N-terminal signal peptide occupies residues 1–15 (MKFLVFLGIITTVAA). An SARS ORF8 Ig-like domain is found at 19–121 (ECSLQSCTQH…HDVRVVLDFI (103 aa)). Cystine bridges form between C25–C90, C37–C102, and C61–C83. N78 is a glycosylation site (N-linked (GlcNAc...) (complex) asparagine; by host).

As to quaternary structure, homodimer. Interacts with host IL17RA. Interacts with host IL17RC. Interacts with host MHC-I. Post-translationally, glycosylated by the host when secreted via the conventional pathway. The glycosylated form cannot bind IL17A and would not participate in the cytokine storm.

Its subcellular location is the secreted. Functionally, plays a role in modulating the host immune response. May act as a secreted virokine by mimicking interleukin-17A (IL17A), and thereby binding to the IL17RA receptor, leading to activation of the IL17 pathway and increased secretion of pro-inflammatory factors. Contributes to the cytokine storm during SARS-CoV-2 infection when secreted by unconventional pathway. May act by down-regulating major histocompability complex class I (MHC-I) at cell surface. May inhibit expression of some members of the IFN-stimulated gene (ISG) family including hosts IGF2BP1/ZBP1, MX1 and MX2, and DHX58. The chain is ORF8 protein from Severe acute respiratory syndrome coronavirus 2 (2019-nCoV).